We begin with the raw amino-acid sequence, 822 residues long: DNA gyrase subunit A (822 aa).

Positions 32-497 constitute a Topo IIA-type catalytic domain; the sequence is LPDVRDGLKP…QVLSLEDEDL (466 aa). The active-site O-(5'-phospho-DNA)-tyrosine intermediate is Tyr-120. The GyrA-box signature appears at 524-530; it reads QKRGGRG.

Belongs to the type II topoisomerase GyrA/ParC subunit family. As to quaternary structure, heterotetramer, composed of two GyrA and two GyrB chains. In the heterotetramer, GyrA contains the active site tyrosine that forms a transient covalent intermediate with DNA, while GyrB binds cofactors and catalyzes ATP hydrolysis.

It is found in the cytoplasm. It catalyses the reaction ATP-dependent breakage, passage and rejoining of double-stranded DNA.. Its function is as follows. A type II topoisomerase that negatively supercoils closed circular double-stranded (ds) DNA in an ATP-dependent manner to modulate DNA topology and maintain chromosomes in an underwound state. Negative supercoiling favors strand separation, and DNA replication, transcription, recombination and repair, all of which involve strand separation. Also able to catalyze the interconversion of other topological isomers of dsDNA rings, including catenanes and knotted rings. Type II topoisomerases break and join 2 DNA strands simultaneously in an ATP-dependent manner. This Streptococcus pneumoniae serotype 4 (strain ATCC BAA-334 / TIGR4) protein is DNA gyrase subunit A.